The primary structure comprises 299 residues: 33 kDa chaperonin (299 aa).

Cystine bridges form between C240/C242 and C273/C276.

This sequence belongs to the HSP33 family. Post-translationally, under oxidizing conditions two disulfide bonds are formed involving the reactive cysteines. Under reducing conditions zinc is bound to the reactive cysteines and the protein is inactive.

Its subcellular location is the cytoplasm. Redox regulated molecular chaperone. Protects both thermally unfolding and oxidatively damaged proteins from irreversible aggregation. Plays an important role in the bacterial defense system toward oxidative stress. This chain is 33 kDa chaperonin, found in Gloeothece citriformis (strain PCC 7424) (Cyanothece sp. (strain PCC 7424)).